Here is a 400-residue protein sequence, read N- to C-terminus: MATGGGAEEESQRGRPQLPLPARPVARVEEPEGVREKMGWAQVVKNLAEKKGDFREPRRRDETGSGASGGLGSPGGLATPNPGDFPPAARGDPKGRRRDPTGEASDAYRKKSASGAGDPSRRKKAEVTAAMATPARPGTTEDATERPLQDEPPAAGPGKGRFLVRICFQGDESACPTRDFVVGALILRSIGMDPDDIYAVIQIPGSREFDVSFRSAEKLALFLRVYEEKRELEDCWENFVVLGRSRSSLKTLFILFRNETVDVEDIVTWLKRHCDVLAVPVKVTDRFGIWTGEYKCEIELRQGEGGVRHLPGAFFLGAERGYSWYKGQPKTCFKCGSRTHMSGTCTQDRCFRCGEEGHLSPYCRKVIVCNLCGKRGHAFAQCPKAVHNSVTAQLTSVAGH.

The tract at residues 1 to 157 (MATGGGAEEE…LQDEPPAAGP (157 aa)) is disordered. Composition is skewed to basic and acidic residues over residues 26-38 (ARVEEPEGVREKM) and 47-63 (LAEKKGDFREPRRRDET). Positions 66–75 (GASGGLGSPG) are enriched in gly residues. The segment covering 91-109 (GDPKGRRRDPTGEASDAYR) has biased composition (basic and acidic residues). Y198 is subject to Phosphotyrosine. 2 CCHC-type zinc fingers span residues 349-365 (RCFRCGEEGHLSPYCRK) and 369-384 (CNLCGKRGHAFAQCPK).

As to quaternary structure, interacts with CGAS. Interacts with RIGI. Interacts with IFIH1/MDA5.

It localises to the cytoplasm. In terms of biological role, nucleic acid-binding protein involved in innate immune response to DNA and RNA viruses. Binds DNA and RNA in the cytoplasm and acts by promoting recognition of viral nucleic acids by virus sensors, such as RIGI, IFIH1/MDA5 and CGAS. Acts as a co-sensor for recognition of double-stranded DNA (dsDNA) by cGAS in the cytoplasm, thereby playing a role in innate immune response to cytosolic dsDNA and DNA virus. Binds dsDNA and probably acts by promoting sensing of dsDNA by CGAS, leading to enhance CGAS oligomerization and activation. Promotes sensing of viral RNA by RIG-I-like receptors proteins RIGI and IFIH1/MDA5 via two mechanisms: binds double-stranded RNA (dsRNA), enhancing the binding of RIGI and IFIH1/MDA5 to dsRNA and promotes 'Lys-63'-linked ubiquitination and subsequent activation of RIGI and IFIH1/MDA5. In Mus musculus (Mouse), this protein is Zinc finger CCHC domain-containing protein 3.